A 2293-amino-acid chain; its full sequence is G-protein coupled receptor 179 (2293 aa).

The first 27 residues, 1-27 (MGARAVVISSLAWGLLSCCFLCSGALG), serve as a signal peptide directing secretion. The segment at 62-245 (FLYSGDVQRL…CHEGQLRPGW (184 aa)) is cache-like region. N75 carries N-linked (GlcNAc...) asparagine glycosylation. C76 and C236 are disulfide-bonded. The N-linked (GlcNAc...) asparagine glycan is linked to N298. A run of 7 helical transmembrane segments spans residues 383-403 (AVLA…LVAY), 416-436 (IVLL…VFIL), 445-465 (CVAL…TIIL), 494-514 (LGQL…GALE), 544-564 (YIMV…CYAT), 585-602 (LLLS…VPSL), and 608-628 (LLLF…LIFI). C445 and C537 form a disulfide bridge. N661 carries N-linked (GlcNAc...) asparagine glycosylation. Residues 733 to 812 (QHSRDSGSLG…GRESLADGPP (80 aa)) are disordered. Residues 738–759 (SGSLGLGSLPGSSRRRLLSSSL) show a composition bias toward low complexity. The segment covering 773–782 (STYDHHREHN) has biased composition (basic and acidic residues). A glycan (N-linked (GlcNAc...) asparagine) is linked at N823. 11 disordered regions span residues 872–935 (EERK…HPPI), 1046–1235 (GTGE…NPAL), 1275–1294 (ERTE…LSRS), 1326–1345 (EAVC…QLVH), 1388–1411 (GTST…ATFW), 1479–1560 (ELAG…HGGS), 1578–1770 (ATLS…VCPW), 1792–1828 (TVGK…TSKG), 1844–1882 (WKPP…KGEL), 1924–2051 (SSSH…GSEK), and 2212–2293 (FLPE…WDCE). Residues 1080–1089 (LKTPLQQGSV) are compositionally biased toward polar residues. 3 stretches are compositionally biased toward basic and acidic residues: residues 1105–1123 (TYKE…KGKP), 1173–1186 (CQKE…DRNK), and 1275–1286 (ERTEGGSLEKKP). Composition is skewed to basic and acidic residues over residues 1546–1555 (ASSKAGEKLL) and 1597–1632 (RTSE…RIQK). A compositionally biased stretch (polar residues) spans 1644 to 1663 (PGSTPQRDTEKAQASLQRQG). Basic and acidic residues-rich tracts occupy residues 1682–1698 (GEER…RPND) and 1717–1728 (KKSERLGSEKEV). The segment covering 1737-1747 (PGDSSQQPDTP) has biased composition (polar residues). Composition is skewed to basic and acidic residues over residues 1748–1761 (NTEK…EHGS), 1796–1813 (GLER…RQNL), and 1872–1882 (ASDRASEKGEL). Residues 1937 to 1948 (RVSSQPLVSTGD) show a composition bias toward polar residues. The segment covering 1979 to 2007 (TETEMSRQDEKEKSQEEKERAPETRDHEG) has biased composition (basic and acidic residues). The segment covering 2283-2293 (SPPPDYPWDCE) has biased composition (pro residues).

It belongs to the G-protein coupled receptor 3 family. Homodimer. Associates with the R7 group RGS-GNB5 complexes, composed of an R7 group RGS subunit (RGS6, RGS7, RGS9 or RGS11) and GNB5, promoting their localization to the cell membrane and regulating the GTPase activator activity of R7 RGS proteins. Interacts with TRPM1. Interacts with GRM6. Interacts with EGFLAM; transsynaptic interaction is required for synaptic organization of photoreceptor cells.

The protein localises to the cell membrane. It localises to the postsynaptic cell membrane. It is found in the cell projection. Its subcellular location is the dendrite. In terms of biological role, orphan receptor involved in vision. Required for signal transduction through retinal depolarizing bipolar cells. Acts as an atypical G-protein coupled receptor that recruits and regulates the R7 group RGS-GNB5 complexes instead of activating G proteins: promotes the GTPase activator activity of R7 RGS proteins, increasing the GTPase activity of G protein alpha subunits, thereby driving them into their inactive GDP-bound form. Associates with components of metabotropic signaling cascade in retina ON-bipolar neurons, such as TRPM1 and GRM6: may control the ability of the GRM6 cascade to gate TRPM1. This is G-protein coupled receptor 179 from Mus musculus (Mouse).